A 715-amino-acid polypeptide reads, in one-letter code: Eosinophil peroxidase (715 aa).

Residues 1–17 (MHLLPALAGVLATLVLA) form the signal peptide. Positions 18–139 (QPCEGTDPAS…SGCALRDQAE (122 aa)) are excised as a propeptide. Residues N52 and N113 are each glycosylated (N-linked (GlcNAc...) asparagine). An intrachain disulfide couples C141 to C152. D232 provides a ligand contact to heme b. The active-site Proton acceptor is the H233. Ca(2+) is bound at residue D234. 2 disulfide bridges follow: C253–C263 and C257–C281. Ca(2+) is bound by residues T306, F308, D310, and S312. N-linked (GlcNAc...) asparagine glycans are attached at residues N327 and N363. Residues C359 and C370 are joined by a disulfide bond. Residues E380 and H474 each contribute to the heme b site. Y488 carries the 3'-nitrotyrosine modification. 2 cysteine pairs are disulfide-bonded: C578-C635 and C676-C701. 2 N-linked (GlcNAc...) asparagine glycosylation sites follow: N700 and N708.

The protein belongs to the peroxidase family. XPO subfamily. Tetramer of two light chains and two heavy chains. It depends on Ca(2+) as a cofactor. Heme b is required as a cofactor.

The protein resides in the cytoplasmic granule. It carries out the reaction 2 a phenolic donor + H2O2 = 2 a phenolic radical donor + 2 H2O. Mediates tyrosine nitration of secondary granule proteins in mature resting eosinophils. Shows significant inhibitory activity towards Mycobacterium tuberculosis H37Rv by inducing bacterial fragmentation and lysis. The sequence is that of Eosinophil peroxidase (EPX) from Homo sapiens (Human).